Here is a 357-residue protein sequence, read N- to C-terminus: MRSPQSILAIVAFATTAIAGVVPSTEKRADDIPELDVKLTQVEGTLVKAVVTNNGDEDLNILNLNFFKDTAPVKKVSVYSQGAEVPFAGVRLRHKTSGLSPEVFTYLGPGESFEDEFDVAFTADLSQGGRIVVKAEGFASTTDTDGDTLSGVVHYKSNELEIDVDGKAAAKNFASLNQFSKRTRLTGCTGSRGSAATRAIRDSAPLAAMAAGAARNGGRAFTQYFKTNDQQVRNLVAARFDAVAREASSTTSGRTTYYCDDPYGICSPNVLAYALPSRNIISNCPAYYSLSHLTWRCHGQDRVTTSIHEFTHTPGVFSPGTDDLAYGHQAATSLSTWEALNNADSFSLFANAVYLGC.

An N-terminal signal peptide occupies residues 1–19 (MRSPQSILAIVAFATTAIA). A propeptide spanning residues 20–182 (GVVPSTEKRA…FASLNQFSKR (163 aa)) is cleaved from the precursor. 3 disulfide bridges follow: cysteine 188–cysteine 259, cysteine 266–cysteine 284, and cysteine 297–cysteine 357. A Zn(2+)-binding site is contributed by histidine 308. Residue glutamate 309 is part of the active site. Histidine 312 and aspartate 323 together coordinate Zn(2+).

The protein belongs to the peptidase M35 family. Requires Zn(2+) as cofactor.

The protein localises to the secreted. The catalysed reaction is Preferential cleavage of bonds with hydrophobic residues in P1'. Also 3-Asn-|-Gln-4 and 8-Gly-|-Ser-9 bonds in insulin B chain.. Functionally, secreted metalloproteinase that allows assimilation of proteinaceous substrates. Shows high activities on basic nuclear substrates such as histone and protamine. The chain is Neutral protease 2 homolog BDCG_00922 from Ajellomyces dermatitidis (strain ER-3 / ATCC MYA-2586) (Blastomyces dermatitidis).